We begin with the raw amino-acid sequence, 87 residues long: Toxin CngtIII (87 aa).

The first 19 residues, 1–19 (MNSLLMITACLVLFGTVWA), serve as a signal peptide directing secretion. Residues 20–85 (KEGYLVNKST…TYPLPNKTCS (66 aa)) enclose the LCN-type CS-alpha/beta domain. Cystine bridges form between Cys-31-Cys-84, Cys-35-Cys-60, Cys-44-Cys-65, and Cys-48-Cys-67.

Belongs to the long (4 C-C) scorpion toxin superfamily. Sodium channel inhibitor family. Beta subfamily. As to expression, expressed by the venom gland.

The protein localises to the secreted. Beta toxins bind voltage-independently at site-4 of sodium channels (Nav) and shift the voltage of activation toward more negative potentials thereby affecting sodium channel activation and promoting spontaneous and repetitive firing. The sequence is that of Toxin CngtIII from Centruroides noxius (Mexican scorpion).